A 1169-amino-acid chain; its full sequence is Chromosome partition protein Smc (1169 aa).

32-39 (PNGSGKSN) contacts ATP. A coiled-coil region spans residues 166–507 (DEISGIAEFD…RIKALKEMEE (342 aa)). One can recognise an SMC hinge domain in the interval 523 to 636 (PGIIDIVGNL…ENIDIAKELA (114 aa)). A coiled-coil region spans residues 676-1030 (SKLNKIADEI…NKKKEVFMEV (355 aa)).

This sequence belongs to the SMC family. Homodimer.

It localises to the cytoplasm. Functionally, required for chromosome condensation and partitioning. The chain is Chromosome partition protein Smc from Methanocaldococcus jannaschii (strain ATCC 43067 / DSM 2661 / JAL-1 / JCM 10045 / NBRC 100440) (Methanococcus jannaschii).